A 785-amino-acid chain; its full sequence is Mitochondrial intermediate peptidase (785 aa).

The N-terminal 43 residues, 1–43, are a transit peptide targeting the mitochondrion; it reads MLTRPAQNALLKSMQPLFRFRGCLLAKSTSTPRRDISTSSRKL. His-567 lines the Zn(2+) pocket. Glu-568 is an active-site residue. Positions 571 and 574 each coordinate Zn(2+).

The protein belongs to the peptidase M3 family. Zn(2+) is required as a cofactor.

It localises to the mitochondrion matrix. The catalysed reaction is Release of an N-terminal octapeptide as second stage of processing of some proteins imported into the mitochondrion.. Cleaves proteins, imported into the mitochondrion, to their mature size. While most mitochondrial precursor proteins are processed to the mature form in one step by mitochondrial processing peptidase (MPP), the sequential cleavage by MIP of an octapeptide after initial processing by MPP is a required step for a subgroup of nuclear-encoded precursor proteins destined for the matrix or the inner membrane. In Pleurotus djamor (Pink oyster mushroom), this protein is Mitochondrial intermediate peptidase (OCT1).